The chain runs to 663 residues: A-type ATP synthase subunit I (663 aa).

7 helical membrane passes run 376 to 396, 412 to 432, 468 to 488, 497 to 517, 534 to 554, 568 to 588, and 589 to 609; these read FFFG…IVAA, FAYI…LFGS, LAAL…GFVI, GAVF…LLAS, IALF…LMII, ARLM…NVLV, and GMVW…IIFF.

The protein belongs to the V-ATPase 116 kDa subunit family. As to quaternary structure, has multiple subunits with at least A(3), B(3), C, D, E, F, H, I and proteolipid K(x).

Its subcellular location is the cell membrane. In terms of biological role, component of the A-type ATP synthase that produces ATP from ADP in the presence of a proton gradient across the membrane. This is A-type ATP synthase subunit I from Thermococcus kodakarensis (strain ATCC BAA-918 / JCM 12380 / KOD1) (Pyrococcus kodakaraensis (strain KOD1)).